The sequence spans 79 residues: uncharacterized protein (79 aa).

The N-terminal stretch at 1-33 (MRLSIRAIVLFALVWIGLLMSGYGVLVGSKVNA) is a signal peptide.

This is an uncharacterized protein from Salmonella paratyphi A (strain ATCC 9150 / SARB42).